The primary structure comprises 223 residues: Putative germin-like protein subfamily 1 member 12 (223 aa).

The N-terminal stretch at 1–24 is a signal peptide; the sequence is MNMKNLYLAILYLLAASTLPFAIA. A disulfide bridge connects residues Cys-34 and Cys-51. Residues 65–216 enclose the Cupin type-1 domain; it reads SGLDKARTTE…AFQLDPKVII (152 aa). Asn-81 carries an N-linked (GlcNAc...) asparagine glycan. Residues His-114, His-116, and Glu-121 each coordinate Mn(2+). N-linked (GlcNAc...) asparagine glycosylation occurs at Asn-145. Residue His-162 participates in Mn(2+) binding.

It belongs to the germin family. As to quaternary structure, oligomer (believed to be a pentamer but probably hexamer).

The protein localises to the secreted. It localises to the extracellular space. The protein resides in the apoplast. May play a role in plant defense. Probably has no oxalate oxidase activity even if the active site is conserved. In Arabidopsis thaliana (Mouse-ear cress), this protein is Putative germin-like protein subfamily 1 member 12.